We begin with the raw amino-acid sequence, 525 residues long: Peptide chain release factor 3 (525 aa).

The tr-type G domain maps to alanine 9 to glutamine 276. GTP is bound by residues serine 18 to threonine 25, aspartate 86 to histidine 90, and asparagine 140 to aspartate 143.

Belongs to the TRAFAC class translation factor GTPase superfamily. Classic translation factor GTPase family. PrfC subfamily.

Its subcellular location is the cytoplasm. Functionally, increases the formation of ribosomal termination complexes and stimulates activities of RF-1 and RF-2. It binds guanine nucleotides and has strong preference for UGA stop codons. It may interact directly with the ribosome. The stimulation of RF-1 and RF-2 is significantly reduced by GTP and GDP, but not by GMP. This Francisella tularensis subsp. novicida (strain U112) protein is Peptide chain release factor 3.